The sequence spans 374 residues: Dispase autolysis-inducing protein (374 aa).

A signal peptide spans methionine 1–alanine 26.

The protein resides in the secreted. Induces autolysis of dispase and thermolysin. The polypeptide is Dispase autolysis-inducing protein (daip) (Streptomyces mobaraensis (Streptoverticillium mobaraense)).